A 543-amino-acid chain; its full sequence is Probable protein kinase UbiB (543 aa).

The Protein kinase domain occupies 123 to 501 (DFDSQALASA…GSRQGRARYL (379 aa)). Residues 129–137 (LASASIAQV) and Lys-152 contribute to the ATP site. The Proton acceptor role is filled by Asp-287. The helical transmembrane segment at 517 to 537 (MVNIALWPIGLYVAGGVIWLA) threads the bilayer.

This sequence belongs to the ABC1 family. UbiB subfamily.

The protein localises to the cell inner membrane. Its pathway is cofactor biosynthesis; ubiquinone biosynthesis [regulation]. Functionally, is probably a protein kinase regulator of UbiI activity which is involved in aerobic coenzyme Q (ubiquinone) biosynthesis. This Edwardsiella ictaluri (strain 93-146) protein is Probable protein kinase UbiB.